A 129-amino-acid polypeptide reads, in one-letter code: Ribulose bisphosphate carboxylase small subunit (129 aa).

The disordered stretch occupies residues 109–129 (LRMTRTESNGRSQHYMWETQR).

It belongs to the RuBisCO small chain family. Heterohexadecamer of 8 large and 8 small subunits.

In terms of biological role, ruBisCO catalyzes two reactions: the carboxylation of D-ribulose 1,5-bisphosphate, the primary event in carbon dioxide fixation, as well as the oxidative fragmentation of the pentose substrate. Both reactions occur simultaneously and in competition at the same active site. Although the small subunit is not catalytic it is essential for maximal activity. This is Ribulose bisphosphate carboxylase small subunit from Rhizobium meliloti (strain 1021) (Ensifer meliloti).